The sequence spans 83 residues: Short neurotoxin OKI-01/OKI-19 (83 aa).

Positions 1–21 (MKTLLLTLVVVTIVCLDLGYT) are cleaved as a signal peptide. 4 cysteine pairs are disulfide-bonded: Cys-24/Cys-45, Cys-38/Cys-62, Cys-64/Cys-75, and Cys-76/Cys-81.

It belongs to the three-finger toxin family. Short-chain subfamily. Type I alpha-neurotoxin sub-subfamily. As to expression, expressed by the venom gland.

It is found in the secreted. In terms of biological role, binds to muscle nicotinic acetylcholine receptor (nAChR) and inhibit acetylcholine from binding to the receptor, thereby impairing neuromuscular transmission. In Laticauda laticaudata (Blue-ringed sea krait), this protein is Short neurotoxin OKI-01/OKI-19.